Reading from the N-terminus, the 698-residue chain is Methionine--tRNA ligase (698 aa).

Positions 21–31 (PYANGPLHFGH) match the 'HIGH' region motif. Residues Cys153, Cys156, Cys166, and Cys169 each contribute to the Zn(2+) site. The 'KMSKS' region signature appears at 341–345 (QFSKS). An ATP-binding site is contributed by Lys344. One can recognise a tRNA-binding domain in the interval 599–698 (DFRKLDLRVG…EDVAPGSLVS (100 aa)).

This sequence belongs to the class-I aminoacyl-tRNA synthetase family. MetG type 1 subfamily. As to quaternary structure, homodimer. The cofactor is Zn(2+).

It is found in the cytoplasm. It catalyses the reaction tRNA(Met) + L-methionine + ATP = L-methionyl-tRNA(Met) + AMP + diphosphate. Its function is as follows. Is required not only for elongation of protein synthesis but also for the initiation of all mRNA translation through initiator tRNA(fMet) aminoacylation. This chain is Methionine--tRNA ligase, found in Protochlamydia amoebophila (strain UWE25).